The chain runs to 202 residues: Phosphatidyl-N-methylethanolamine N-methyltransferase (202 aa).

At 1 to 12 the chain is on the lumenal side; that stretch reads MTTLSDYVDFSQ. The helical intramembrane region spans 13–33; the sequence is DSFKYAALSIAFNPIFWNVVA. Residues 34–45 lie on the Lumenal side of the membrane; sequence RAEYRSHFLTRI. Residues 46–66 form a helical membrane-spanning segment; it reads FGSPYRGCYFLAITIFSLGIL. Topologically, residues 67–90 are cytoplasmic; it reads RDHIYQQALEDQPYYAPVHQPVLG. A helical membrane pass occupies residues 91-111; it reads GALFAVGSVLVLSSMYALGVT. 95 to 97 is a binding site for S-adenosyl-L-methionine; the sequence is AVG. The Lumenal segment spans residues 112-154; sequence GTYLGDYFGILMDAPVTGFPFNVTGSPMYWGSTLNFLGVALYK. Residues 155-175 form a helical membrane-spanning segment; it reads GKVAGILLTALVFVLYWFALK. The Cytoplasmic portion of the chain corresponds to 176-202; that stretch reads WEDPFTAEIYAKRERERAKSKRGGKNQ. Residue 177-178 coordinates S-adenosyl-L-methionine; it reads ED.

The protein belongs to the class VI-like SAM-binding methyltransferase superfamily. PEMT/PEM2 methyltransferase family.

The protein localises to the endoplasmic reticulum membrane. It is found in the mitochondrion membrane. It carries out the reaction a 1,2-diacyl-sn-glycero-3-phospho-N-methylethanolamine + S-adenosyl-L-methionine = a 1,2-diacyl-sn-glycero-3-phospho-N,N-dimethylethanolamine + S-adenosyl-L-homocysteine + H(+). The enzyme catalyses a 1,2-diacyl-sn-glycero-3-phospho-N,N-dimethylethanolamine + S-adenosyl-L-methionine = a 1,2-diacyl-sn-glycero-3-phosphocholine + S-adenosyl-L-homocysteine + H(+). It participates in phospholipid metabolism; phosphatidylcholine biosynthesis. Its function is as follows. Catalyzes the second two steps of the methylation pathway of phosphatidylcholine biosynthesis, the SAM-dependent methylation of phosphatidylmonomethylethanolamine (PMME) to phosphatidyldimethylethanolamine (PDME) and of PDME to phosphatidylcholine (PC). The chain is Phosphatidyl-N-methylethanolamine N-methyltransferase from Emericella nidulans (strain FGSC A4 / ATCC 38163 / CBS 112.46 / NRRL 194 / M139) (Aspergillus nidulans).